The chain runs to 564 residues: Tripeptidyl-peptidase 1 (564 aa).

An N-terminal signal peptide occupies residues 1–19 (MGLQACLLGLFALILSGKC). Residues 20-195 (SYSPEPDQRR…PEPQVTGTVG (176 aa)) constitute a propeptide, removed in mature form. C111 and C122 are joined by a disulfide. The Peptidase S53 domain occupies 199-564 (GVTPSVIRKR…PALPKTLLNP (366 aa)). Residues N210 and N222 are each glycosylated (N-linked (GlcNAc...) asparagine). Active-site charge relay system residues include E272 and D276. N-linked (GlcNAc...) asparagine glycans are attached at residues N286, N313, and N443. Intrachain disulfides connect C365–C527 and C523–C538. The active-site Charge relay system is the S475. D518 and V519 together coordinate Ca(2+). Residues G540, G542, and D544 each contribute to the Ca(2+) site.

As to quaternary structure, monomer. Interacts with CLN5. Interacts with CLN3. Ca(2+) is required as a cofactor. Activated by autocatalytic proteolytical processing upon acidification. N-glycosylation is required for processing and activity.

Its subcellular location is the lysosome. The protein resides in the melanosome. The enzyme catalyses Release of an N-terminal tripeptide from a polypeptide, but also has endopeptidase activity.. Its function is as follows. Lysosomal serine protease with tripeptidyl-peptidase I activity. May act as a non-specific lysosomal peptidase which generates tripeptides from the breakdown products produced by lysosomal proteinases. Requires substrates with an unsubstituted N-terminus. The sequence is that of Tripeptidyl-peptidase 1 (TPP1) from Pongo abelii (Sumatran orangutan).